The sequence spans 164 residues: MNFATADLCDAHEDQLTAGTLRVLDPVFSRFGRASRFGGEAVTLKVFEDNTLVRATLEEKGVARVLVVDGGGSLRCALVGGNLGKLGEKNGWAGIVVFGCVRDTLELNECNLGIIALATHPQRSQKRGGGERDVSLRLPGSVVRPGEWIYADSDGVLVSSAPLV.

Substrate-binding positions include 80–83 (GGNL) and Arg102. Residue Asp103 coordinates a divalent metal cation.

The protein belongs to the class II aldolase/RraA-like family. Homotrimer. The cofactor is a divalent metal cation.

It catalyses the reaction 4-hydroxy-4-methyl-2-oxoglutarate = 2 pyruvate. It carries out the reaction oxaloacetate + H(+) = pyruvate + CO2. Functionally, catalyzes the aldol cleavage of 4-hydroxy-4-methyl-2-oxoglutarate (HMG) into 2 molecules of pyruvate. Also contains a secondary oxaloacetate (OAA) decarboxylase activity due to the common pyruvate enolate transition state formed following C-C bond cleavage in the retro-aldol and decarboxylation reactions. This chain is Putative 4-hydroxy-4-methyl-2-oxoglutarate aldolase, found in Paraburkholderia phymatum (strain DSM 17167 / CIP 108236 / LMG 21445 / STM815) (Burkholderia phymatum).